A 152-amino-acid chain; its full sequence is UPF0336 protein Tfu_2666 (152 aa).

One can recognise a MaoC-like domain in the interval 7-116 (YLGRAYELPE…TTITDIKSLA (110 aa)).

This sequence belongs to the UPF0336 family.

The chain is UPF0336 protein Tfu_2666 from Thermobifida fusca (strain YX).